The sequence spans 396 residues: Elongation factor Tu (396 aa).

The region spanning 10-205 is the tr-type G domain; sequence KPHVNIGTIG…AVDESIPDPV (196 aa). Residues 19 to 26 form a G1 region; it reads GHVDHGKT. 19-26 serves as a coordination point for GTP; sequence GHVDHGKT. A Mg(2+)-binding site is contributed by threonine 26. The G2 stretch occupies residues 62-66; that stretch reads GITIN. Residues 83–86 form a G3 region; it reads DAPG. Residues 83 to 87 and 138 to 141 each bind GTP; these read DAPGH and NKAD. Residues 138–141 form a G4 region; the sequence is NKAD. Positions 175–177 are G5; that stretch reads SGL.

This sequence belongs to the TRAFAC class translation factor GTPase superfamily. Classic translation factor GTPase family. EF-Tu/EF-1A subfamily. Monomer.

It localises to the cytoplasm. It catalyses the reaction GTP + H2O = GDP + phosphate + H(+). GTP hydrolase that promotes the GTP-dependent binding of aminoacyl-tRNA to the A-site of ribosomes during protein biosynthesis. In Nocardia farcinica (strain IFM 10152), this protein is Elongation factor Tu.